Reading from the N-terminus, the 793-residue chain is Serine/threonine-protein phosphatase 1 regulatory subunit GAC1 (793 aa).

Polar residues predominate over residues 1–10; that stretch reads MVIQTATTLS. The segment at 1-20 is disordered; that stretch reads MVIQTATTLSPAKARPSFPH. Positions 235–360 constitute a CBM21 domain; that stretch reads TKYLNGQNVK…NNNGKNYHLF (126 aa). Ser-415 and Ser-424 each carry phosphoserine. Disordered regions lie at residues 450–491 and 616–671; these read LENA…SIDL and TTMD…LNDH. A compositionally biased stretch (polar residues) spans 623–633; it reads KTSTINNSTDT. The segment covering 637–648 has biased composition (basic and acidic residues); it reads PSKENGTVKENK. Positions 649–665 are enriched in low complexity; that stretch reads SSANSTSAPSSSQNRAS.

Its function is as follows. Regulates the activity of glycogen synthase. It is most probably a regulatory subunit for protein phosphatase type 1. In Saccharomyces cerevisiae (strain ATCC 204508 / S288c) (Baker's yeast), this protein is Serine/threonine-protein phosphatase 1 regulatory subunit GAC1 (GAC1).